Reading from the N-terminus, the 232-residue chain is Ubiquitin carboxyl-terminal hydrolase UCHL3 (232 aa).

Residues 6 to 225 form the UCH catalytic domain; it reads IWTPLESNPD…LRFSALAVIP (220 aa). The interval 10-14 is interaction with ubiquitin; the sequence is LESNP. Cys92 functions as the Nucleophile in the catalytic mechanism. The tract at residues 151–159 is crossover loop which restricts access of large ubiquitin adducts to the active site; the sequence is QVENRDDIL. The segment at 163-165 is interaction with ubiquitin; that stretch reads THF. Catalysis depends on His164, which acts as the Proton donor.

The protein belongs to the peptidase C12 family.

The enzyme catalyses Thiol-dependent hydrolysis of ester, thioester, amide, peptide and isopeptide bonds formed by the C-terminal Gly of ubiquitin (a 76-residue protein attached to proteins as an intracellular targeting signal).. Thiol protease that recognizes and hydrolyzes a peptide bond at the C-terminal glycine of either ubiquitin or NEDD8. Essential for parasite blood stage survival. This Plasmodium falciparum (isolate 3D7) protein is Ubiquitin carboxyl-terminal hydrolase UCHL3.